The sequence spans 339 residues: Ketol-acid reductoisomerase (NADP(+)) (339 aa).

Residues 1–182 enclose the KARI N-terminal Rossmann domain; the sequence is MRVYYDRDAD…GGGRAGIIET (182 aa). NADP(+)-binding positions include 24 to 27, Arg-48, Ser-51, Ser-53, and 83 to 86; these read YGSQ and DELQ. The active site involves His-108. Residue Gly-134 coordinates NADP(+). Residues 183–328 enclose the KARI C-terminal knotted domain; the sequence is TFREECETDL…AKLRDMMPWI (146 aa). Positions 191, 195, 227, and 231 each coordinate Mg(2+). Ser-252 is a binding site for substrate.

Belongs to the ketol-acid reductoisomerase family. It depends on Mg(2+) as a cofactor.

The enzyme catalyses (2R)-2,3-dihydroxy-3-methylbutanoate + NADP(+) = (2S)-2-acetolactate + NADPH + H(+). The catalysed reaction is (2R,3R)-2,3-dihydroxy-3-methylpentanoate + NADP(+) = (S)-2-ethyl-2-hydroxy-3-oxobutanoate + NADPH + H(+). It functions in the pathway amino-acid biosynthesis; L-isoleucine biosynthesis; L-isoleucine from 2-oxobutanoate: step 2/4. The protein operates within amino-acid biosynthesis; L-valine biosynthesis; L-valine from pyruvate: step 2/4. In terms of biological role, involved in the biosynthesis of branched-chain amino acids (BCAA). Catalyzes an alkyl-migration followed by a ketol-acid reduction of (S)-2-acetolactate (S2AL) to yield (R)-2,3-dihydroxy-isovalerate. In the isomerase reaction, S2AL is rearranged via a Mg-dependent methyl migration to produce 3-hydroxy-3-methyl-2-ketobutyrate (HMKB). In the reductase reaction, this 2-ketoacid undergoes a metal-dependent reduction by NADPH to yield (R)-2,3-dihydroxy-isovalerate. The protein is Ketol-acid reductoisomerase (NADP(+)) of Rhodopseudomonas palustris (strain BisB18).